The sequence spans 92 residues: Small ribosomal subunit protein uS19c (92 aa).

Belongs to the universal ribosomal protein uS19 family.

The protein localises to the plastid. Its subcellular location is the chloroplast. Functionally, protein S19 forms a complex with S13 that binds strongly to the 16S ribosomal RNA. This Cicer arietinum (Chickpea) protein is Small ribosomal subunit protein uS19c.